The chain runs to 437 residues: Putrescine hydroxycinnamoyltransferase 3 (437 aa).

Catalysis depends on proton acceptor residues histidine 151 and aspartate 383.

The protein belongs to the plant acyltransferase family. As to expression, highly expressed in roots. Expressed at low levels in shoots and flowers.

In terms of biological role, hydroxycinnamoyl transferase that catalyzes the transfer of an acyl from p-coumaryol-CoA to putrescine, to produce coumaroyl putrescine. Can use feruloyl-CoA and caffeoyl-CoA as acyl donors. The chain is Putrescine hydroxycinnamoyltransferase 3 from Oryza sativa subsp. japonica (Rice).